The primary structure comprises 155 residues: Large ribosomal subunit protein uL16 (155 aa).

Belongs to the universal ribosomal protein uL16 family. As to quaternary structure, part of the 50S ribosomal subunit.

Binds 23S rRNA and is also seen to make contacts with the A and possibly P site tRNAs. The polypeptide is Large ribosomal subunit protein uL16 (Synechococcus sp. (strain CC9311)).